A 197-amino-acid chain; its full sequence is dITP/XTP pyrophosphatase (197 aa).

Position 10–15 (10–15 (SHNGGK)) interacts with substrate. Residues Glu41 and Asp70 each coordinate Mg(2+). The Proton acceptor role is filled by Asp70. Substrate-binding positions include Ser71, 154 to 157 (FGYD), Lys177, and 182 to 183 (HR).

The protein belongs to the HAM1 NTPase family. Homodimer. It depends on Mg(2+) as a cofactor.

The enzyme catalyses XTP + H2O = XMP + diphosphate + H(+). The catalysed reaction is dITP + H2O = dIMP + diphosphate + H(+). It catalyses the reaction ITP + H2O = IMP + diphosphate + H(+). Its function is as follows. Pyrophosphatase that catalyzes the hydrolysis of nucleoside triphosphates to their monophosphate derivatives, with a high preference for the non-canonical purine nucleotides XTP (xanthosine triphosphate), dITP (deoxyinosine triphosphate) and ITP. Seems to function as a house-cleaning enzyme that removes non-canonical purine nucleotides from the nucleotide pool, thus preventing their incorporation into DNA/RNA and avoiding chromosomal lesions. In Pseudomonas syringae pv. tomato (strain ATCC BAA-871 / DC3000), this protein is dITP/XTP pyrophosphatase.